A 941-amino-acid polypeptide reads, in one-letter code: MNKKKKPFLGMPAPLGYVPGLGRGATGFTTRSDIGPARDANDPVDDRHAPPGKRTVGDQMKKNQAADDDDEDLNDTNYDEFNGYAGSLFSSGPYEKDDEEADAIYAALDKRMDERRKERREQREKEEIEKYRMERPKIQQQFSDLKRKLAEVTEEEWLSIPEVGDARNKRQRNPRYEKLTPVPDSFFAKHLQTGENHTSVDPRQTQFGGLNTPYPGGLNTPYPGGMTPGLMTPGTGELDMRKIGQARNTLMDMRLSQVSDSVSGQTVVDPKGYLTDLNSMIPTHGGDINDIKKARLLLKSVRETNPHHPPAWIASARLEEVTGKLQVARNLIMKGTEMCPKSEDVWLEAARLQPGDTAKAVVAQAVRHLPQSVRIYIRAAELETDIRAKKRVLRKALEHVPNSVRLWKAAVELEEPEDARIMLSRAVECCPTSVELWLALARLETYENARKVLNKARENIPTDRHIWITAAKLEEANGNTQMVEKIIDRAITSLRANGVEINREQWIQDAEECDRAGSVATCQAVMRAVIGIGIEEEDRKHTWMEDADSCVAHNALECARAIYAYALQVFPSKKSVWLRAAYFEKNHGTRESLEALLQRAVAHCPKAEVLWLMGAKSKWLAGDVPAARSILALAFQANPNSEEIWLAAVKLESENNEYERARRLLAKARSSAPTARVFMKSVKLEWVLGNITAAQELCEEALRHYEDFPKLWMMKGQIEEQGELMERAREAYNQGLKKCPHSTPLWLLLSRLEEKIGQLTRARAILEKSRLKNPKNPGLWLESVRLEYRAGLKNIANTLMAKALQECPNSGILWSEAVFLEARPQRKTKSVDALKKCEHDPHVLLAVAKLFWSERKITKAREWFHRTVKIDSDLGDAWAFFYKFELQHGTEEQQEEVRKRCENAEPRHGELWCAVSKDITNWQRKIGEILVLVAARIKNTF.

The interval 1–79 is disordered; the sequence is MNKKKKPFLG…DEDLNDTNYD (79 aa). Residues 39-65 show a composition bias toward basic and acidic residues; that stretch reads DANDPVDDRHAPPGKRTVGDQMKKNQA. Acidic residues predominate over residues 66-78; sequence ADDDDEDLNDTNY. At serine 143 the chain carries Phosphoserine. Phosphothreonine occurs at positions 180, 266, and 275. Serine 279 carries the phosphoserine modification. HAT repeat units lie at residues 384-416, 418-444, 445-476, 554-586, 588-620, 622-654, 689-721, 723-755, and 855-887; these read TDIR…LEEP, DARI…ARLE, TYEN…LEEA, NALE…FEKN, GTRE…SKWL, GDVP…LESE, GNIT…IEEQ, ELME…LEEK, and RKIT…FELQ.

In terms of assembly, identified in the spliceosome B complex. Identified in the spliceosome C complex. Associates with the U5 snRNP particle. Component of the U4/U6-U5 tri-snRNP complex composed of the U4, U6 and U5 snRNAs and at least PRPF3, PRPF4, PRPF6, PRPF8, PRPF31, SNRNP200, TXNL4A, SNRNP40, DDX23, CD2BP2, PPIH, SNU13, EFTUD2, SART1 and USP39, LSm proteins LSm2-8 and Sm proteins. Interacts with ARAF1. Interacts with AR and NR3C1, but not ESR1, independently of the presence of hormones. Interacts with USH1G. Post-translationally, phosphorylated by PRP4K during spliceosome assembly.

The protein resides in the nucleus. Its subcellular location is the nucleoplasm. It is found in the nucleus speckle. Its function is as follows. Involved in pre-mRNA splicing as component of the U4/U6-U5 tri-snRNP complex, one of the building blocks of the spliceosome. Enhances dihydrotestosterone-induced transactivation activity of AR, as well as dexamethasone-induced transactivation activity of NR3C1, but does not affect estrogen-induced transactivation. The sequence is that of Pre-mRNA-processing factor 6 (Prpf6) from Rattus norvegicus (Rat).